Reading from the N-terminus, the 475-residue chain is Stromelysin-1 (475 aa).

The signal sequence occupies residues 1–17; it reads MKGLPVLLWLCTAVCSS. A propeptide spans 18 to 97 (activation peptide); sequence YPLHGSEEDA…PRCGVPDVGG (80 aa). A Cysteine switch motif is present at residues 88–95; the sequence is PRCGVPDV. Cysteine 90 provides a ligand contact to Zn(2+). Asparagine 118 carries an N-linked (GlcNAc...) asparagine glycan. Ca(2+) is bound by residues aspartate 122 and aspartate 156. Positions 166 and 168 each coordinate Zn(2+). 4 residues coordinate Ca(2+): aspartate 173, glycine 174, glycine 176, and valine 178. Residue histidine 181 participates in Zn(2+) binding. The Ca(2+) site is built by glycine 188, asparagine 190, and aspartate 192. A Zn(2+)-binding site is contributed by histidine 194. Aspartate 196, aspartate 197, and glutamate 199 together coordinate Ca(2+). Histidine 216 serves as a coordination point for Zn(2+). The active site involves glutamate 217. 2 residues coordinate Zn(2+): histidine 220 and histidine 226. Hemopexin repeat units follow at residues 285–334, 335–381, 383–431, and 432–475; these read LPMC…WPSL, PSNM…GLPE, VQKI…FPGI, and GTKV…WFNC. A disulfide bridge connects residues cysteine 288 and cysteine 475. Aspartate 295 is a Ca(2+) binding site. 2 residues coordinate Ca(2+): aspartate 387 and aspartate 436.

The protein belongs to the peptidase M10A family. Requires Ca(2+) as cofactor. Zn(2+) is required as a cofactor.

The protein resides in the secreted. It is found in the extracellular space. Its subcellular location is the extracellular matrix. The catalysed reaction is Preferential cleavage where P1', P2' and P3' are hydrophobic residues.. Inhibited by a synthetic peptide corresponding to the inhibitory cysteine switch motif. Inhibited by ethylenediaminetetraacetic acid (EDTA), 1,10-pheanthroline, 2-mecaptoethanol, dithiothreitol and metalloproteinase inhibitor protein TIMP. Functionally, can degrade fibronectin, laminin, gelatins of type I, III, IV, and V; collagens III, IV, X, and IX, and cartilage proteoglycans. Activates procollagenase. Its function is as follows. Metalloproteinase with a rather broad substrate specificity that can degrade fibronectin, laminin, gelatins of type I, III, IV, and V; collagens III, IV, X, and IX, and cartilage proteoglycans. Activates different molecules including growth factors, plasminogen or other matrix metalloproteinases such as MMP9. Once released into the extracellular matrix (ECM), the inactive pro-enzyme is activated by the plasmin cascade signaling pathway. Also acts intracellularly. For example, in dopaminergic neurons, gets activated by the serine protease HTRA2 upon stress and plays a pivotal role in DA neuronal degeneration by mediating microglial activation and alpha-synuclein/SNCA cleavage. In addition, plays a role in immune response and possesses antiviral activity against various viruses. Mechanistically, translocates from the cytoplasm into the cell nucleus upon virus infection to influence NF-kappa-B activities. This chain is Stromelysin-1 (Mmp3), found in Rattus norvegicus (Rat).